The chain runs to 520 residues: Laccase (520 aa).

A signal peptide spans 1 to 21; the sequence is MSRFQSLLAFVVASLAAVAHA. 2 Plastocyanin-like domains span residues 23–148 and 160–302; these read IGPT…FVVY and VDND…ILRY. Asparagine 72 and asparagine 75 each carry an N-linked (GlcNAc...) asparagine glycan. Positions 85, 87, 130, and 132 each coordinate Cu cation. 2 cysteine pairs are disulfide-bonded: cysteine 106/cysteine 509 and cysteine 138/cysteine 226. N-linked (GlcNAc...) asparagine glycans are attached at residues asparagine 210, asparagine 229, and asparagine 354. One can recognise a Plastocyanin-like 3 domain in the interval 369-491; sequence TVPVLLQIIS…AGFAVVFAED (123 aa). Residues histidine 416, histidine 419, histidine 421, histidine 473, cysteine 474, histidine 475, and histidine 479 each coordinate Cu cation.

It belongs to the multicopper oxidase family. It depends on Cu cation as a cofactor.

It is found in the secreted. It catalyses the reaction 4 hydroquinone + O2 = 4 benzosemiquinone + 2 H2O. In terms of biological role, lignin degradation and detoxification of lignin-derived products. Has activity towards guaiacol. The sequence is that of Laccase from Trametes hirsuta (White-rot fungus).